We begin with the raw amino-acid sequence, 171 residues long: UPF0398 protein MGAS10270_Spy1470 (171 aa).

This sequence belongs to the UPF0398 family.

The polypeptide is UPF0398 protein MGAS10270_Spy1470 (Streptococcus pyogenes serotype M2 (strain MGAS10270)).